The chain runs to 202 residues: NADH-quinone oxidoreductase subunit C (202 aa).

This sequence belongs to the complex I 30 kDa subunit family. NDH-1 is composed of 14 different subunits. Subunits NuoB, C, D, E, F, and G constitute the peripheral sector of the complex.

It localises to the cell inner membrane. The enzyme catalyses a quinone + NADH + 5 H(+)(in) = a quinol + NAD(+) + 4 H(+)(out). NDH-1 shuttles electrons from NADH, via FMN and iron-sulfur (Fe-S) centers, to quinones in the respiratory chain. The immediate electron acceptor for the enzyme in this species is believed to be ubiquinone. Couples the redox reaction to proton translocation (for every two electrons transferred, four hydrogen ions are translocated across the cytoplasmic membrane), and thus conserves the redox energy in a proton gradient. In Paracidovorax citrulli (strain AAC00-1) (Acidovorax citrulli), this protein is NADH-quinone oxidoreductase subunit C.